Reading from the N-terminus, the 101-residue chain is NADH-quinone oxidoreductase subunit K (101 aa).

Transmembrane regions (helical) follow at residues 4-24 (VYDY…GIML), 29-49 (IILL…NFIA), and 61-81 (VFVF…LAIV).

This sequence belongs to the complex I subunit 4L family. In terms of assembly, NDH-1 is composed of 14 different subunits. Subunits NuoA, H, J, K, L, M, N constitute the membrane sector of the complex.

It is found in the cell inner membrane. It catalyses the reaction a quinone + NADH + 5 H(+)(in) = a quinol + NAD(+) + 4 H(+)(out). In terms of biological role, NDH-1 shuttles electrons from NADH, via FMN and iron-sulfur (Fe-S) centers, to quinones in the respiratory chain. The immediate electron acceptor for the enzyme in this species is believed to be ubiquinone. Couples the redox reaction to proton translocation (for every two electrons transferred, four hydrogen ions are translocated across the cytoplasmic membrane), and thus conserves the redox energy in a proton gradient. This Legionella pneumophila (strain Paris) protein is NADH-quinone oxidoreductase subunit K.